The sequence spans 88 residues: SPbeta prophage-derived protein BhlB (88 aa).

The next 2 membrane-spanning stretches (helical) occupy residues 15–35 (LLAI…AFII) and 45–65 (DCLY…AAWF).

This sequence belongs to the SPP1 holin family.

The protein resides in the cell membrane. May be involved in the secretion of the autolysin BlyA. This chain is SPbeta prophage-derived protein BhlB (bhlB), found in Bacillus subtilis (strain 168).